The following is a 387-amino-acid chain: Putative odorant receptor 19b (387 aa).

Topologically, residues 1–40 (MDISKVDSTRALVNHWRIFRIMGIHPPGKRTFWGRHYTAY) are cytoplasmic. The helical transmembrane segment at 41–61 (SMVWNVTFHICIWVSFSVNLL) threads the bilayer. Over 62–71 (QSNSLETFCE) the chain is Extracellular. Residues 72-92 (SLCVTMPHTLYMLKLINVRRM) form a helical membrane-spanning segment. The Cytoplasmic segment spans residues 93–127 (RGEMISSHWLLRLLDKRLGCADERQIIMAGIERAE). A helical transmembrane segment spans residues 128-148 (FIFRTIFRGLACTVVLGIIYI). The Extracellular portion of the chain corresponds to 149 to 171 (SASSEPTLMYPTWIPWNWKDSTS). The chain crosses the membrane as a helical span at residues 172-192 (AYLATAMLHTTALMANATLVL). At 193–254 (NLSSYPGTYL…LRLFKSLERS (62 aa)) the chain is on the cytoplasmic side. The helical transmembrane segment at 255-275 (LSMTCFLQFFSTACAQCTICY) threads the bilayer. The Extracellular segment spans residues 276-285 (FLLFGNVGIM). Residues 286–306 (RFMNMLFLLVILTTETLLLCY) traverse the membrane as a helical segment. The Cytoplasmic segment spans residues 307–336 (TAELPCKEGESLLTAVYSCNWLSQSVNFRR). A helical membrane pass occupies residues 337 to 357 (LLLLMLARCQIPMILVSGVIV). The Extracellular segment spans residues 358 to 387 (PISMKTFTVMIKGAYTMLTLLNEIRKTSLE).

It belongs to the insect chemoreceptor superfamily. Heteromeric odorant receptor channel (TC 1.A.69) family. Or2a subfamily. As to quaternary structure, interacts with Orco. Complexes exist early in the endomembrane system in olfactory sensory neurons (OSNs), coupling these complexes to the conserved ciliary trafficking pathway.

The protein resides in the cell membrane. Odorant receptor which mediates acceptance or avoidance behavior, depending on its substrates. The odorant receptor repertoire encodes a large collection of odor stimuli that vary widely in identity, intensity, and duration. May form a complex with Orco to form odorant-sensing units, providing sensitive and prolonged odorant signaling and calcium permeability. The sequence is that of Putative odorant receptor 19b from Drosophila melanogaster (Fruit fly).